The following is a 149-amino-acid chain: 3-dehydroquinate dehydratase (149 aa).

Tyr26 functions as the Proton acceptor in the catalytic mechanism. Residues Asn77, His83, and Asp90 each coordinate substrate. His103 serves as the catalytic Proton donor. Substrate is bound by residues 104 to 105 (LS) and Arg114.

The protein belongs to the type-II 3-dehydroquinase family. As to quaternary structure, homododecamer.

The catalysed reaction is 3-dehydroquinate = 3-dehydroshikimate + H2O. Its pathway is metabolic intermediate biosynthesis; chorismate biosynthesis; chorismate from D-erythrose 4-phosphate and phosphoenolpyruvate: step 3/7. In terms of biological role, catalyzes a trans-dehydration via an enolate intermediate. In Haemophilus influenzae (strain PittGG), this protein is 3-dehydroquinate dehydratase.